A 219-amino-acid polypeptide reads, in one-letter code: Large ribosomal subunit protein uL1 (219 aa).

It belongs to the universal ribosomal protein uL1 family. As to quaternary structure, part of the 50S ribosomal subunit.

In terms of biological role, binds directly to 23S rRNA. Probably involved in E site tRNA release. Protein L1 is also a translational repressor protein, it controls the translation of its operon by binding to its mRNA. The sequence is that of Large ribosomal subunit protein uL1 from Pyrococcus abyssi (strain GE5 / Orsay).